A 201-amino-acid chain; its full sequence is 3-isopropylmalate dehydratase small subunit (201 aa).

Belongs to the LeuD family. LeuD type 1 subfamily. In terms of assembly, heterodimer of LeuC and LeuD.

It carries out the reaction (2R,3S)-3-isopropylmalate = (2S)-2-isopropylmalate. Its pathway is amino-acid biosynthesis; L-leucine biosynthesis; L-leucine from 3-methyl-2-oxobutanoate: step 2/4. In terms of biological role, catalyzes the isomerization between 2-isopropylmalate and 3-isopropylmalate, via the formation of 2-isopropylmaleate. The chain is 3-isopropylmalate dehydratase small subunit from Methylorubrum populi (strain ATCC BAA-705 / NCIMB 13946 / BJ001) (Methylobacterium populi).